We begin with the raw amino-acid sequence, 89 residues long: Small ribosomal subunit protein uS15 (89 aa).

It belongs to the universal ribosomal protein uS15 family. Part of the 30S ribosomal subunit. Forms a bridge to the 50S subunit in the 70S ribosome, contacting the 23S rRNA.

Its function is as follows. One of the primary rRNA binding proteins, it binds directly to 16S rRNA where it helps nucleate assembly of the platform of the 30S subunit by binding and bridging several RNA helices of the 16S rRNA. Functionally, forms an intersubunit bridge (bridge B4) with the 23S rRNA of the 50S subunit in the ribosome. This is Small ribosomal subunit protein uS15 from Caulobacter sp. (strain K31).